Consider the following 345-residue polypeptide: Phosphate acyltransferase (345 aa).

Belongs to the PlsX family. Homodimer. Probably interacts with PlsY.

Its subcellular location is the cytoplasm. The enzyme catalyses a fatty acyl-[ACP] + phosphate = an acyl phosphate + holo-[ACP]. The protein operates within lipid metabolism; phospholipid metabolism. Functionally, catalyzes the reversible formation of acyl-phosphate (acyl-PO(4)) from acyl-[acyl-carrier-protein] (acyl-ACP). This enzyme utilizes acyl-ACP as fatty acyl donor, but not acyl-CoA. The sequence is that of Phosphate acyltransferase from Chromobacterium violaceum (strain ATCC 12472 / DSM 30191 / JCM 1249 / CCUG 213 / NBRC 12614 / NCIMB 9131 / NCTC 9757 / MK).